We begin with the raw amino-acid sequence, 141 residues long: Transcription antitermination protein NusB (141 aa).

It belongs to the NusB family.

Its function is as follows. Involved in transcription antitermination. Required for transcription of ribosomal RNA (rRNA) genes. Binds specifically to the boxA antiterminator sequence of the ribosomal RNA (rrn) operons. The polypeptide is Transcription antitermination protein NusB (Neisseria gonorrhoeae (strain ATCC 700825 / FA 1090)).